Consider the following 184-residue polypeptide: MSRLAKKPIVLPQGVTVEIKDNVVKVKGPKGELSQEFLPYVKIEVEGNEVWVRPNENQIIRKSDWRKIKMFQGTYWSLIRNMVVGVTEGYKKELEIVGIGYRAQLQGNTVVMNLGYAHPVVYEIPSDVKIEVPAPNRIVVSGIDKQRVGQVAAEIRAFRPPNVYTGKGIRYVGEVVRQKEGKKA.

Belongs to the universal ribosomal protein uL6 family. As to quaternary structure, part of the 50S ribosomal subunit.

Its function is as follows. This protein binds to the 23S rRNA, and is important in its secondary structure. It is located near the subunit interface in the base of the L7/L12 stalk, and near the tRNA binding site of the peptidyltransferase center. This chain is Large ribosomal subunit protein uL6, found in Thermotoga petrophila (strain ATCC BAA-488 / DSM 13995 / JCM 10881 / RKU-1).